Reading from the N-terminus, the 120-residue chain is MPKIGVSLIVLIMLIIFLAGCNKNEQNGDETKMQSLVGYVVLKDNERAILITDTKAPGKEDYNLSEGQLMNKFKNNIVIVGLSEIDNTDDLKRGEKIKVWFHTRKESNPPSATIQKYELL.

A signal peptide spans 1 to 27 (MPKIGVSLIVLIMLIIFLAGCNKNEQN).

This is an uncharacterized protein from Bacillus subtilis (strain 168).